Here is a 456-residue protein sequence, read N- to C-terminus: MLNSAMSVVILAAGKGTRMYSDIPKVLHTLAGKPMVQHVIDAATKLGAAQVHLVYGHGGELLKQTLKDDKLNWVLQAEQLGTGHAMQQAAPFFSDDEDILMLYGDVPLISVETLQRLRDAKPQGGIGLLTVKLDDPSGYGHITRENGKVTGIVEHKDATDEQRQIQEINTGILIANGADLKRWLSKLTNNNAQGEYYITDIIALAYQEGREIAAVHPARISETDGVNNRLQLSRLERIYQAEQAEKLLLSGVMLRDPARFDLRGTLHCGMDVEIDANVIIEGYVTLGHRVKIGAGCIIKNSVIGDDCEISPYSVVEDAHLEAACTIGPFARLRPGAELLAGAHVGNFVEMKKARLGKGSKAGHLTYLGDAEIGDNVNIGAGTITCNYDGANKFKTVIGDDVFVGSDTQLVAPVTVGKGATIAAGTTVTRNVADNELVLSRVPQVHKQGWQRPVKKK.

Positions 1–229 are pyrophosphorylase; that stretch reads MLNSAMSVVI…ISETDGVNNR (229 aa). Residues 11-14, Lys25, Gln76, 81-82, 103-105, Gly140, Glu154, Asn169, and Asn227 contribute to the UDP-N-acetyl-alpha-D-glucosamine site; these read LAAG, GT, and YGD. Asp105 contributes to the Mg(2+) binding site. Position 227 (Asn227) interacts with Mg(2+). The interval 230 to 250 is linker; the sequence is LQLSRLERIYQAEQAEKLLLS. The interval 251 to 456 is N-acetyltransferase; the sequence is GVMLRDPARF…QGWQRPVKKK (206 aa). UDP-N-acetyl-alpha-D-glucosamine is bound by residues Arg333 and Lys351. His363 (proton acceptor) is an active-site residue. Positions 366 and 377 each coordinate UDP-N-acetyl-alpha-D-glucosamine. Acetyl-CoA contacts are provided by residues Ala380, 386 to 387, Ser405, Ala423, and Arg440; that span reads NY.

This sequence in the N-terminal section; belongs to the N-acetylglucosamine-1-phosphate uridyltransferase family. It in the C-terminal section; belongs to the transferase hexapeptide repeat family. In terms of assembly, homotrimer. Mg(2+) serves as cofactor.

The protein localises to the cytoplasm. It carries out the reaction alpha-D-glucosamine 1-phosphate + acetyl-CoA = N-acetyl-alpha-D-glucosamine 1-phosphate + CoA + H(+). The enzyme catalyses N-acetyl-alpha-D-glucosamine 1-phosphate + UTP + H(+) = UDP-N-acetyl-alpha-D-glucosamine + diphosphate. Its pathway is nucleotide-sugar biosynthesis; UDP-N-acetyl-alpha-D-glucosamine biosynthesis; N-acetyl-alpha-D-glucosamine 1-phosphate from alpha-D-glucosamine 6-phosphate (route II): step 2/2. It functions in the pathway nucleotide-sugar biosynthesis; UDP-N-acetyl-alpha-D-glucosamine biosynthesis; UDP-N-acetyl-alpha-D-glucosamine from N-acetyl-alpha-D-glucosamine 1-phosphate: step 1/1. It participates in bacterial outer membrane biogenesis; LPS lipid A biosynthesis. Its function is as follows. Catalyzes the last two sequential reactions in the de novo biosynthetic pathway for UDP-N-acetylglucosamine (UDP-GlcNAc). The C-terminal domain catalyzes the transfer of acetyl group from acetyl coenzyme A to glucosamine-1-phosphate (GlcN-1-P) to produce N-acetylglucosamine-1-phosphate (GlcNAc-1-P), which is converted into UDP-GlcNAc by the transfer of uridine 5-monophosphate (from uridine 5-triphosphate), a reaction catalyzed by the N-terminal domain. This is Bifunctional protein GlmU from Salmonella agona (strain SL483).